The chain runs to 212 residues: LexA repressor (212 aa).

Residues 26-46 (VREIGEAVGLSSTSTVHGHID) constitute a DNA-binding region (H-T-H motif). Residues Ser128 and Lys171 each act as for autocatalytic cleavage activity in the active site.

Belongs to the peptidase S24 family. Homodimer.

The catalysed reaction is Hydrolysis of Ala-|-Gly bond in repressor LexA.. Its function is as follows. Represses a number of genes involved in the response to DNA damage (SOS response), including recA and lexA. In the presence of single-stranded DNA, RecA interacts with LexA causing an autocatalytic cleavage which disrupts the DNA-binding part of LexA, leading to derepression of the SOS regulon and eventually DNA repair. This is LexA repressor from Oenococcus oeni (strain ATCC BAA-331 / PSU-1).